The sequence spans 134 residues: Interleukin-5 (134 aa).

An N-terminal signal peptide occupies residues 1–19 (MRMLLHLSLLALGAAYVYA). An O-linked (GalNAc...) threonine glycan is attached at T22. N47 and N90 each carry an N-linked (GlcNAc...) asparagine glycan.

The protein belongs to the IL-5 family. In terms of assembly, homodimer; disulfide-linked. Interacts with IL5RA. Interacts with CSF2RB.

It localises to the secreted. Functionally, homodimeric cytokine expressed predominantly by T-lymphocytes and NK cells that plays an important role in the survival, differentiation, and chemotaxis of eosinophils. Also acts on activated and resting B-cells to induce immunoglobulin production, growth, and differentiation. Mechanistically, exerts its biological effects through a receptor composed of IL5RA subunit and the cytokine receptor common subunit beta/CSF2RB. Binding to the receptor leads to activation of various kinases including LYN, SYK and JAK2 and thereby propagates signals through the RAS-MAPK and JAK-STAT5 pathways respectively. In Macaca mulatta (Rhesus macaque), this protein is Interleukin-5 (IL5).